Here is a 529-residue protein sequence, read N- to C-terminus: DEP domain-containing protein 1B (529 aa).

The DEP domain occupies 24–108; it reads FRAGMPLRKH…DDGHLYRFPP (85 aa). A Rho-GAP domain is found at 192-393; the sequence is ARLQKVLGLD…FLMDNYQEIL (202 aa).

This chain is DEP domain-containing protein 1B (DEPDC1B), found in Gallus gallus (Chicken).